Reading from the N-terminus, the 500-residue chain is Cytochrome P450 71B37 (500 aa).

The chain crosses the membrane as a helical span at residues 2 to 22 (ATIWFLPLLFLSCLLLAALRL). Cysteine 440 is a heme binding site.

This sequence belongs to the cytochrome P450 family. It depends on heme as a cofactor.

It is found in the membrane. This Arabidopsis thaliana (Mouse-ear cress) protein is Cytochrome P450 71B37 (CYP71B37).